We begin with the raw amino-acid sequence, 437 residues long: Replication factor C large subunit (437 aa).

Residue 48-55 (GPPGVGKT) coordinates ATP. Positions 410 to 437 (TQASKPTSEEKAEKSKKYYPKRSSSRKT) are disordered. Positions 416-425 (TSEEKAEKSK) are enriched in basic and acidic residues. A compositionally biased stretch (basic residues) spans 426 to 437 (KYYPKRSSSRKT).

It belongs to the activator 1 small subunits family. RfcL subfamily. In terms of assembly, heteromultimer composed of small subunits (RfcS) and large subunits (RfcL).

Part of the RFC clamp loader complex which loads the PCNA sliding clamp onto DNA. The chain is Replication factor C large subunit from Sulfolobus acidocaldarius (strain ATCC 33909 / DSM 639 / JCM 8929 / NBRC 15157 / NCIMB 11770).